Here is a 205-residue protein sequence, read N- to C-terminus: Ephrin-A1 (205 aa).

Residues 1–18 form the signal peptide; sequence MEFFWASLLGLCCSLAAA. The region spanning 19–151 is the Ephrin RBD domain; that stretch reads NRHTVFWNSS…RLKVMIAGKI (133 aa). Asparagine 26 is a glycosylation site (N-linked (GlcNAc...) asparagine). Disulfide bonds link cysteine 51–cysteine 92 and cysteine 80–cysteine 140. A lipid anchor (GPI-anchor amidated serine) is attached at serine 182. The propeptide at 183-205 is removed in mature form; the sequence is AAPRLFPLAWAVLLLPFLLLQIP.

Belongs to the ephrin family. As to quaternary structure, monomer. Homodimer. Forms heterodimers with EPHA2. Binds to the receptor tyrosine kinases EPHA2, EPHA3, EPHA4, EPHA5, EPHA6 and EPHA7. Also binds with low affinity to EPHA1. Post-translationally, undergoes proteolysis by a metalloprotease to give rise to a soluble monomeric form. In terms of processing, N-Glycosylation is required for binding to EPHA2 receptor and inducing its internalization.

The protein localises to the cell membrane. The protein resides in the secreted. In terms of biological role, cell surface GPI-bound ligand for Eph receptors, a family of receptor tyrosine kinases which are crucial for migration, repulsion and adhesion during neuronal, vascular and epithelial development. Binds promiscuously Eph receptors residing on adjacent cells, leading to contact-dependent bidirectional signaling into neighboring cells. Plays an important role in angiogenesis and tumor neovascularization. The recruitment of VAV2, VAV3 and PI3-kinase p85 subunit by phosphorylated EPHA2 is critical for EFNA1-induced RAC1 GTPase activation and vascular endothelial cell migration and assembly. Exerts anti-oncogenic effects in tumor cells through activation and down-regulation of EPHA2. Activates EPHA2 by inducing tyrosine phosphorylation which leads to its internalization and degradation. Acts as a negative regulator in the tumorigenesis of gliomas by down-regulating EPHA2 and FAK. Can evoke collapse of embryonic neuronal growth cone and regulates dendritic spine morphogenesis. This is Ephrin-A1 (EFNA1) from Bos taurus (Bovine).